Here is a 220-residue protein sequence, read N- to C-terminus: NADH-quinone oxidoreductase subunit I (220 aa).

4Fe-4S ferredoxin-type domains are found at residues 71–102 (LQRL…IITH) and 112–141 (DSYT…MGNR). The [4Fe-4S] cluster site is built by C82, C85, C88, C92, C121, C124, C127, and C131. The tract at residues 189–220 (ATPLDYVQEPSKEESKKETPTSPEANKGDENV) is disordered. The segment covering 198–207 (PSKEESKKET) has biased composition (basic and acidic residues).

It belongs to the complex I 23 kDa subunit family. NDH-1 is composed of 14 different subunits. Subunits NuoA, H, J, K, L, M, N constitute the membrane sector of the complex. Requires [4Fe-4S] cluster as cofactor.

It localises to the cell inner membrane. The enzyme catalyses a quinone + NADH + 5 H(+)(in) = a quinol + NAD(+) + 4 H(+)(out). Functionally, NDH-1 shuttles electrons from NADH, via FMN and iron-sulfur (Fe-S) centers, to quinones in the respiratory chain. The immediate electron acceptor for the enzyme in this species is believed to be ubiquinone. Couples the redox reaction to proton translocation (for every two electrons transferred, four hydrogen ions are translocated across the cytoplasmic membrane), and thus conserves the redox energy in a proton gradient. In Helicobacter acinonychis (strain Sheeba), this protein is NADH-quinone oxidoreductase subunit I.